We begin with the raw amino-acid sequence, 299 residues long: ATP phosphoribosyltransferase (299 aa).

Belongs to the ATP phosphoribosyltransferase family. Long subfamily. As to quaternary structure, equilibrium between an active dimeric form, an inactive hexameric form and higher aggregates. Interconversion between the various forms is largely reversible and is influenced by the natural substrates and inhibitors of the enzyme. It depends on Mg(2+) as a cofactor.

Its subcellular location is the cytoplasm. It catalyses the reaction 1-(5-phospho-beta-D-ribosyl)-ATP + diphosphate = 5-phospho-alpha-D-ribose 1-diphosphate + ATP. It participates in amino-acid biosynthesis; L-histidine biosynthesis; L-histidine from 5-phospho-alpha-D-ribose 1-diphosphate: step 1/9. With respect to regulation, feedback inhibited by histidine. In terms of biological role, catalyzes the condensation of ATP and 5-phosphoribose 1-diphosphate to form N'-(5'-phosphoribosyl)-ATP (PR-ATP). Has a crucial role in the pathway because the rate of histidine biosynthesis seems to be controlled primarily by regulation of HisG enzymatic activity. In Buchnera aphidicola subsp. Schizaphis graminum (strain Sg), this protein is ATP phosphoribosyltransferase (hisG).